Here is a 266-residue protein sequence, read N- to C-terminus: Amylovoran biosynthesis glycosyltransferase AmsE (266 aa).

Belongs to the glycosyltransferase 2 family.

The protein operates within glycan metabolism; exopolysaccharide biosynthesis. Functionally, involved in the biosynthesis of amylovoran which functions as a virulence factor. This chain is Amylovoran biosynthesis glycosyltransferase AmsE (amsE), found in Erwinia amylovora (Fire blight bacteria).